The chain runs to 250 residues: Probable dihydroorotate dehydrogenase B (NAD(+)), electron transfer subunit (250 aa).

The region spanning 1 to 89 (MNRITVDQVR…RGPYGNGFQI (89 aa)) is the FAD-binding FR-type domain. Residues Cys200, Cys205, Cys208, and Cys216 each contribute to the [2Fe-2S] cluster site.

The protein belongs to the PyrK family. In terms of assembly, heterotetramer of 2 PyrK and 2 PyrD type B subunits. The cofactor is [2Fe-2S] cluster. Requires FAD as cofactor.

It participates in pyrimidine metabolism; UMP biosynthesis via de novo pathway; orotate from (S)-dihydroorotate (NAD(+) route): step 1/1. Functionally, responsible for channeling the electrons from the oxidation of dihydroorotate from the FMN redox center in the PyrD type B subunit to the ultimate electron acceptor NAD(+). The chain is Probable dihydroorotate dehydrogenase B (NAD(+)), electron transfer subunit from Thermoplasma acidophilum (strain ATCC 25905 / DSM 1728 / JCM 9062 / NBRC 15155 / AMRC-C165).